Reading from the N-terminus, the 61-residue chain is Insect toxin BsIT1 (61 aa).

The LCN-type CS-alpha/beta domain maps to 1-61; that stretch reads DGYILMRNGC…KHLNYHKKTC (61 aa). 4 disulfide bridges follow: C10–C61, C14–C35, C21–C42, and C25–C44.

It belongs to the long (4 C-C) scorpion toxin superfamily. Sodium channel inhibitor family. Beta subfamily. As to expression, expressed by the venom gland.

It localises to the secreted. Functionally, depressant insect beta-toxins cause a transient contraction paralysis followed by a slow flaccid paralysis. They bind voltage-independently at site-4 of sodium channels (Nav) and shift the voltage of activation toward more negative potentials thereby affecting sodium channel activation and promoting spontaneous and repetitive firing. This toxin is active only on insects and causes a transient contraction paralysis followed by a slow flaccid paralysis. This is Insect toxin BsIT1 from Hottentotta tamulus sindicus (Scorpion).